A 259-amino-acid chain; its full sequence is MSNNSNKRAPTTATQRLKQDYLRIKKDPVPYICAEPLPSNILEWHYVVRGPEMTPYEGGYYHGKLIFPREFPFKPPSIYMITPNGRFKCNTRLCLSITDFHPDTWNPAWSVSTILTGLLSFMVEKGPTLGSIETSDFTKKQLAAQSLVFNLKDKVFCELFPEVVEEIKQKQKAQDELSNRPQNLPLPDVVPDGELHRGQHGIQLLNGHAPAAGPNLAGLPQANRHHGLLGGALANLFVIVGFAAFAYTVKYVLRSIAQE.

The Cytoplasmic segment spans residues 1-226 (MSNNSNKRAP…AGLPQANRHH (226 aa)). The UBC core domain maps to 12–162 (TATQRLKQDY…DKVFCELFPE (151 aa)). Cysteine 94 serves as the catalytic Glycyl thioester intermediate. Residues 227–247 (GLLGGALANLFVIVGFAAFAY) traverse the membrane as a helical; Anchor for type IV membrane protein segment. The Lumenal segment spans residues 248 to 259 (TVKYVLRSIAQE).

This sequence belongs to the ubiquitin-conjugating enzyme family. Interacts with murid herpesvirus 4 protein K3 (mK3).

The protein resides in the endoplasmic reticulum membrane. The enzyme catalyses S-ubiquitinyl-[E1 ubiquitin-activating enzyme]-L-cysteine + [E2 ubiquitin-conjugating enzyme]-L-cysteine = [E1 ubiquitin-activating enzyme]-L-cysteine + S-ubiquitinyl-[E2 ubiquitin-conjugating enzyme]-L-cysteine.. Its pathway is protein modification; protein ubiquitination. Functionally, catalyzes the covalent attachment of ubiquitin to other proteins. Seems to function in the selective degradation of misfolded membrane proteins from the endoplasmic reticulum (ERAD). In cooperation with the GATOR2 complex, catalyzes 'Lys-6'-linked ubiquitination of NPRL2. Its function is as follows. In case of infection by the murid herpesvirus 4, its association with the viral E3 ligase K3 mediates ubiquitination of host surface class I (MHC-I) H-2D(b)/H2-D1 and H-2K(b)/H2-K1 molecules before they exit the endoplasmic reticulum, leading to their degradation by the ERAD system, thus blocking the immune detection of virus-infected cells. The complex formed with the murid herpesvirus 4 protein K3 mediates ubiquitination of lysine, as well as serine and threonine residues present in the cytoplasmic tail of surface class I molecules and promotes ubiquitination of hydroxylated serine or threonine residues via ester bonds instead of the classical isopeptide linkage. In Mus musculus (Mouse), this protein is Ubiquitin-conjugating enzyme E2 J2 (Ube2j2).